A 344-amino-acid polypeptide reads, in one-letter code: Transmembrane protein 268 (344 aa).

Positions 1-31 (MACEPQMDPGGAAGPLPTSSPGWSPLPGGSP) are disordered. Residues 14 to 27 (GPLPTSSPGWSPLP) are compositionally biased toward low complexity. 2 helical membrane-spanning segments follow: residues 106–126 (AFAVVFYVVVWANIYSTSQMF) and 133–153 (AGVLLVTLAATSLTLTLVVIF). The tract at residues 244–266 (TANEGPENLLEETPLLPDRPGST) is disordered. Over residues 247–259 (EGPENLLEETPLL) the composition is skewed to low complexity.

In terms of assembly, interacts with ITGAM; this interaction inhibits ITGAM degradation via the endosome-lysosome pathway. Interacts with ITGB4; this interaction prevents ITGB4 degradation.

The protein resides in the cell membrane. Functionally, stabilizes cell surface expression of ITGAM and participates in the adhesion and migration of phagocytes during bacterial clearance. The polypeptide is Transmembrane protein 268 (TMEM268) (Bos taurus (Bovine)).